Reading from the N-terminus, the 502-residue chain is L-arabinose isomerase (502 aa).

Mn(2+) is bound by residues glutamate 307, glutamate 334, histidine 351, and histidine 450.

The protein belongs to the arabinose isomerase family. The cofactor is Mn(2+).

It catalyses the reaction beta-L-arabinopyranose = L-ribulose. It participates in carbohydrate degradation; L-arabinose degradation via L-ribulose; D-xylulose 5-phosphate from L-arabinose (bacterial route): step 1/3. Catalyzes the conversion of L-arabinose to L-ribulose. This Nocardioides sp. (strain ATCC BAA-499 / JS614) protein is L-arabinose isomerase.